Reading from the N-terminus, the 431-residue chain is MANSC domain-containing protein 1 (431 aa).

The N-terminal stretch at 1-26 (MFFGGEGSLTYTLVIICFLTLRLSAS) is a signal peptide. The Extracellular portion of the chain corresponds to 27-385 (QNCLKKSLED…QYGLPFEKWL (359 aa)). Positions 33-117 (SLEDVVIDIQ…LKPAKGLMSY (85 aa)) constitute an MANSC domain. N-linked (GlcNAc...) asparagine glycans are attached at residues Asn-72, Asn-222, and Asn-251. Residues 234-277 (SPHTTSATPKPATLLPTNASVTPSGTSQPQLATTAPPVTTVTSQ) form a disordered region. Polar residues predominate over residues 248–261 (LPTNASVTPSGTSQ). Residues 262-277 (PQLATTAPPVTTVTSQ) show a composition bias toward low complexity. N-linked (GlcNAc...) asparagine glycosylation is found at Asn-327 and Asn-352. The interval 352–372 (NKTASWEGREASPGSSSQGSV) is disordered. The helical transmembrane segment at 386-408 (LIGSLLFGVLFLVIGLVLLGRIL) threads the bilayer. At 409-431 (SESLRRKRYSRLDYLINGIYVDI) the chain is on the cytoplasmic side.

In terms of tissue distribution, widely expressed.

The protein resides in the membrane. This chain is MANSC domain-containing protein 1 (MANSC1), found in Homo sapiens (Human).